A 557-amino-acid polypeptide reads, in one-letter code: Urocanate hydratase (557 aa).

NAD(+)-binding positions include 53 to 54 (GG), Gln-131, 177 to 179 (GMG), Asp-197, Arg-202, 243 to 244 (NA), 264 to 268 (QTSAH), 274 to 275 (YL), and Tyr-323. The active site involves Cys-411. Residue Gly-493 participates in NAD(+) binding.

Belongs to the urocanase family. NAD(+) serves as cofactor.

The protein resides in the cytoplasm. It catalyses the reaction 4-imidazolone-5-propanoate = trans-urocanate + H2O. Its pathway is amino-acid degradation; L-histidine degradation into L-glutamate; N-formimidoyl-L-glutamate from L-histidine: step 2/3. Catalyzes the conversion of urocanate to 4-imidazolone-5-propionate. This Hahella chejuensis (strain KCTC 2396) protein is Urocanate hydratase.